The primary structure comprises 111 residues: Rubredoxin (111 aa).

One can recognise a Rubredoxin-like domain in the interval 11 to 62 (LDRFECRSCGYVYEPEKGDSKHDIAPETPFAELPINWRCPVCTAKKAAFSNI). C16, C19, C49, and C52 together coordinate Fe cation.

Belongs to the rubredoxin family. Fe(3+) serves as cofactor.

In terms of biological role, rubredoxin is a small nonheme, iron protein lacking acid-labile sulfide. Its single Fe, chelated to 4 Cys, functions as an electron acceptor and may also stabilize the conformation of the molecule. Could be involved in hydrogenase-linked redox processes. The polypeptide is Rubredoxin (rub) (Trichormus variabilis (strain ATCC 29413 / PCC 7937) (Anabaena variabilis)).